We begin with the raw amino-acid sequence, 347 residues long: Olfactory receptor 6J1 (347 aa).

Residues 1-24 (MGNWTAAVTEFVLLGFSLSREVEL) lie on the Extracellular side of the membrane. N-linked (GlcNAc...) asparagine glycosylation occurs at asparagine 3. A helical membrane pass occupies residues 25–45 (LLLVLLLPTFLLTLLGNLLII). At 46–53 (STVLSCSR) the chain is on the cytoplasmic side. A helical transmembrane segment spans residues 54–74 (LHTPMYFFLCNLSILDILFTS). Residues 75 to 98 (VISPKVLANLGSRDKTISFAGCIT) lie on the Extracellular side of the membrane. The cysteines at positions 96 and 188 are disulfide-linked. A helical membrane pass occupies residues 99 to 119 (QCYFYFFLGTVEFLLLTVMSY). Topologically, residues 120–138 (DRYATICCPLRYTTIMRPS) are cytoplasmic. The chain crosses the membrane as a helical span at residues 139–159 (VCIGTVVFSWVGGFLSVLFPT). Residues 160–196 (ILISQLPFCGSNIINHFFCDSGPLLALACADTTAIEL) are Extracellular-facing. A helical transmembrane segment spans residues 197–216 (MDFMLSSMVILCCIVLVAYS). The Cytoplasmic portion of the chain corresponds to 217 to 236 (YTYIILTIVRIPSASGRKKA). Residues 237-257 (FNTCASHLTIVIISSGITVFI) form a helical membrane-spanning segment. The Extracellular portion of the chain corresponds to 258 to 270 (YVTPSQKEYLEIN). A helical membrane pass occupies residues 271 to 291 (KIPLVLSSVVTPFLNPFIYTL). Over 292-347 (RNDTVQGVLRDVWVRVRGVFEKRMRAVLRSRLSSNKDHQGRACSSPPCVYSVKLQC) the chain is Cytoplasmic.

It belongs to the G-protein coupled receptor 1 family.

The protein localises to the cell membrane. In terms of biological role, odorant receptor. This chain is Olfactory receptor 6J1 (OR6J1), found in Homo sapiens (Human).